Consider the following 97-residue polypeptide: Large ribosomal subunit protein uL23 (97 aa).

Belongs to the universal ribosomal protein uL23 family. In terms of assembly, part of the 50S ribosomal subunit. Contacts protein L29, and trigger factor when it is bound to the ribosome.

Functionally, one of the early assembly proteins it binds 23S rRNA. One of the proteins that surrounds the polypeptide exit tunnel on the outside of the ribosome. Forms the main docking site for trigger factor binding to the ribosome. In Anaeromyxobacter dehalogenans (strain 2CP-1 / ATCC BAA-258), this protein is Large ribosomal subunit protein uL23.